We begin with the raw amino-acid sequence, 1553 residues long: Probable serine/threonine-protein kinase qkgA (1553 aa).

Residues 113–142 (SSSSSSSSTSSSPSLTSSPSSPISTSPPYH) form a disordered region. LRR repeat units lie at residues 287 to 309 (NGTFLLLSKSNITRFPMSIINMC), 311 to 333 (QLVELDMSNNRITEIPIEITELK), 334 to 356 (FLKNLNLSDNLINDIPLEICNLT), and 357 to 378 (LLKVLLLNENPLNNFPSSIVEL). Positions 395–619 (SCETWNKVKL…KRLIHESEKS (225 aa)) constitute a Roc domain. Disordered regions lie at residues 643 to 696 (NQGR…QQQQ), 955 to 1019 (ISNS…PSSQ), and 1048 to 1090 (NQNG…NNNK). Composition is skewed to low complexity over residues 648–675 (SISNSASNSSSSLLNSSSSSSPSLTSKK), 683–696 (SQQQQQQHQQQQQQ), 956–1018 (SNST…SPSS), and 1059–1090 (TTTTTSTSTSTTSTTTPTTTTPTIPIKNNNNK). The COR domain maps to 694-893 (QQQLQQSIKE…KTYWKDGVLL (200 aa)). In terms of domain architecture, Protein kinase spans 1242–1546 (ILYERQIGEG…QTSYFDSPFL (305 aa)). ATP contacts are provided by residues 1248-1256 (IGEGGFGLI) and lysine 1271. The active-site Proton acceptor is aspartate 1393.

Belongs to the protein kinase superfamily. TKL Ser/Thr protein kinase family. ROCO subfamily.

The catalysed reaction is L-seryl-[protein] + ATP = O-phospho-L-seryl-[protein] + ADP + H(+). It catalyses the reaction L-threonyl-[protein] + ATP = O-phospho-L-threonyl-[protein] + ADP + H(+). Its function is as follows. Involved in growth, and during development, in aggregation. The polypeptide is Probable serine/threonine-protein kinase qkgA (qkgA-1) (Dictyostelium discoideum (Social amoeba)).